The chain runs to 283 residues: Lectin subunit alpha (283 aa).

Residues 1 to 23 form the signal peptide; the sequence is MSLTMKNVEGFVIFLVIFTSTAA. The region spanning 51 to 159 is the C-type lectin domain; it reads HECARHDQQL…NVKMGYICEP (109 aa). 2 disulfide bridges follow: cysteine 53–cysteine 157 and cysteine 132–cysteine 149.

Its function is as follows. Role in the defense system of the organism against microorganisms. This lectin binds galactose. The protein is Lectin subunit alpha of Sarcophaga peregrina (Flesh fly).